We begin with the raw amino-acid sequence, 508 residues long: UTP--glucose-1-phosphate uridylyltransferase (508 aa).

Ser2 carries the post-translational modification N-acetylserine. Phosphoserine occurs at positions 2 and 13. UTP-binding positions include 113 to 116, Lys127, Gln190, and Gly222; that span reads LNGG. 115-116 is a binding site for substrate; that stretch reads GG. Lys127 is a binding site for Mg(2+). Residues His223, 251 to 253, and Asn330 each bind substrate; that span reads NID. Asp253 provides a ligand contact to UTP. Residue Asp253 coordinates Mg(2+). Lys396 is a UTP binding site. Residue Lys396 is part of the active site. Thr426 carries the post-translational modification Phosphothreonine. The residue at position 434 (Ser434) is a Phosphoserine. Lys438 is subject to N6-acetyllysine. A phosphoserine mark is found at Ser448 and Ser461. The tract at residues 457 to 508 is oligomerization; that stretch reads HLTVSGDVTFGKNVSLKGTVIIIANHGDRIDIPPGAVLENKIVSGNLRILDH. The segment at 502–503 is critical for end-to-end subunit interaction; sequence NL.

The protein belongs to the UDPGP type 1 family. Homooctamer. In terms of tissue distribution, highly expressed in various brain regions. Expressed in amygdala, anterior cingulate cortex, caudate, cerebellar hemisphere, cerebellum, cortex, frontal cortex, hippocampus, hypothalamus, nucleus accumbens, putamen, spinal cord and substantia nigra. Also widely expressed among other tissues, including liver, heart, placenta, lung, kidney, pancreas and skeletal muscle.

The protein resides in the cytoplasm. The catalysed reaction is alpha-D-glucose 1-phosphate + UTP + H(+) = UDP-alpha-D-glucose + diphosphate. Its pathway is glycan biosynthesis; glycogen biosynthesis. UTP--glucose-1-phosphate uridylyltransferase catalyzing the conversion of glucose-1-phosphate into UDP-glucose, a crucial precursor for the production of glycogen. The sequence is that of UTP--glucose-1-phosphate uridylyltransferase from Homo sapiens (Human).